The primary structure comprises 77 residues: MASSSMSTSSWTAREDKQFEMALAKFDKDTPDRWQKIARAVGGKSTEEVKRHYELLLRDVNDIESGRYPQPRYRNTN.

Residues 6 to 61 form the SANT domain; that stretch reads MSTSSWTAREDKQFEMALAKFDKDTPDRWQKIARAVGGKSTEEVKRHYELLLRDVN.

In terms of tissue distribution, expressed just outside the vascular bundles in the rosette stem and the leaf traces. Not detected in floral primordia.

Its subcellular location is the nucleus. Probable transcription factor. The polypeptide is Protein RADIALIS-like 4 (RL4) (Arabidopsis thaliana (Mouse-ear cress)).